We begin with the raw amino-acid sequence, 485 residues long: Glutamyl-tRNA(Gln) amidotransferase subunit A (485 aa).

Residues lysine 75 and serine 150 each act as charge relay system in the active site. Serine 174 serves as the catalytic Acyl-ester intermediate.

The protein belongs to the amidase family. GatA subfamily. Heterotrimer of A, B and C subunits.

The enzyme catalyses L-glutamyl-tRNA(Gln) + L-glutamine + ATP + H2O = L-glutaminyl-tRNA(Gln) + L-glutamate + ADP + phosphate + H(+). Allows the formation of correctly charged Gln-tRNA(Gln) through the transamidation of misacylated Glu-tRNA(Gln) in organisms which lack glutaminyl-tRNA synthetase. The reaction takes place in the presence of glutamine and ATP through an activated gamma-phospho-Glu-tRNA(Gln). The protein is Glutamyl-tRNA(Gln) amidotransferase subunit A of Trichodesmium erythraeum (strain IMS101).